Here is a 355-residue protein sequence, read N- to C-terminus: C-C chemokine receptor type 1 (355 aa).

Over 1–34 the chain is Extracellular; the sequence is METPNTTEDYDTTTEFDYGDATPCQKVNERAFGA. N-linked (GlcNAc...) asparagine glycosylation occurs at Asn5. Disulfide bonds link Cys24–Cys273 and Cys106–Cys183. The chain crosses the membrane as a helical span at residues 35 to 60; the sequence is QLLPPLYSLVFVIGLVGNILVVLVLV. Residues 61-64 are Cytoplasmic-facing; sequence QYKR. Residues 65–91 form a helical membrane-spanning segment; the sequence is LKNMTSIYLLNLAISDLLFLFTLPFWI. The Extracellular segment spans residues 92 to 107; the sequence is DYKLKDDWVFGDAMCK. A helical transmembrane segment spans residues 108-129; that stretch reads ILSGFYYTGLYSEIFFIILLTI. Topologically, residues 130–146 are cytoplasmic; it reads DRYLAIVHAVFALRART. The helical transmembrane segment at 147-171 threads the bilayer; sequence VTFGVITSIIIWALAILASMPGLYF. Residues 172–197 lie on the Extracellular side of the membrane; sequence SKTQWEFTHHTCSLHFPHESLREWKL. Residues 198–223 form a helical membrane-spanning segment; the sequence is FQALKLNLFGLVLPLLVMIICYTGII. The Cytoplasmic portion of the chain corresponds to 224–239; it reads KILLRRPNEKKSKAVR. The chain crosses the membrane as a helical span at residues 240 to 264; that stretch reads LIFVIMIIFFLFWTPYNLTILISVF. Residues 265-281 lie on the Extracellular side of the membrane; the sequence is QDFLFTHECEQSRHLDL. Residues 282–305 traverse the membrane as a helical segment; it reads AVQVTEVIAYTHCCVNPVIYAFVG. The Cytoplasmic segment spans residues 306-355; sequence ERFRKYLRQLFHRRVAVHLVKWLPFLSVDRLERVSSTSPSTGEHELSAGF.

This sequence belongs to the G-protein coupled receptor 1 family. As to quaternary structure, interacts with CREB3. Interacts with CCL3. Interacts with CCL15. Interacts with CCL23. Interacts with GNAI1. Interacts with PF4/CXCL4. In terms of tissue distribution, widely expressed in different hematopoietic cells.

The protein resides in the cell membrane. Chemokine receptor that plays a crucial role in regulating immune cell migration, inflammation, and immune responses. Contributes to the inflammatory response by recruiting immune cells, such as monocytes, macrophages, T-cells, and dendritic cells, to sites of inflammation for the clearance of pathogens and the resolution of tissue damage. When activated by its ligands including CCL3, CCL5-9, CCL13-16 and CCL23, triggers a signaling cascade within immune cells, leading to their migration towards the source of the chemokine. For example, mediates neutrophil migration after activation by CCL3 leading to the sequential release of TNF-alpha and leukotriene B4. Also mediates monocyte migration upon CXCL4 binding. Activation by CCL5 results in neuroinflammation through the ERK1/2 signaling pathway. This Homo sapiens (Human) protein is C-C chemokine receptor type 1 (CCR1).